The chain runs to 1485 residues: Cystic fibrosis transmembrane conductance regulator (1485 aa).

Residues 1–78 lie on the Cytoplasmic side of the membrane; it reads MQRSPVEDAN…SLLRAMARCY (78 aa). Residues 79–99 traverse the membrane as a helical segment; the sequence is IKPFLLFGFLLYIGEATKTVQ. Residues 83 to 353 enclose the ABC transmembrane type-1 1 domain; sequence LLFGFLLYIG…CMVLRMTVTR (271 aa). Over 100–123 the chain is Extracellular; it reads PQLLGRIIASFDPAHEPERANGYF. Residues 124–149 traverse the membrane as a helical segment; sequence LAFGLGLLFTARFLLLQPAMFGLHHL. Topologically, residues 150–195 are cytoplasmic; it reads GMQIRIALFSIIYKKTLKLSSRVLDKISTGQLVSLMSANLGKFDQS. A helical membrane pass occupies residues 196–216; it reads LGMAHFIWISPLQCILCTGLI. Over 217 to 224 the chain is Extracellular; it reads WELIDVNS. A helical transmembrane segment spans residues 225–245; the sequence is FCALAAISLLGVLQAFLSHKM. The Cytoplasmic portion of the chain corresponds to 246-299; it reads GPYKAQKVLLTNKRLALTSEIMENLHSVKAYGWEEIMETLIKNIRQDEVKLTRK. Residues 300–320 traverse the membrane as a helical segment; sequence IGSLRYFYSSAYFFSAIFVIV. Over 321-340 the chain is Extracellular; sequence AAVVPHALSRGINLRRIFTT. A helical transmembrane segment spans residues 341–363; the sequence is LSYCMVLRMTVTRQLPGSIQMWY. The Cytoplasmic portion of the chain corresponds to 364–856; sequence DTMRLIWKIE…YVRYVSNNKS (493 aa). Residues tryptophan 402, 457–464, and glutamine 492 each bind ATP; that span reads GSMGSGKS. One can recognise an ABC transporter 1 domain in the interval 424–645; it reads NGDAGLFFTN…RPDFSSLLLG (222 aa). The tract at residues 653–826 is disordered R region; that stretch reads SAERRCSILT…GILEEENIEA (174 aa). The chain crosses the membrane as a helical span at residues 857–877; sequence LLYVLIFILFIAAIEIAGSVA. The 304-residue stretch at 860-1163 folds into the ABC transmembrane type-1 2 domain; that stretch reads VLIFILFIAA…CVATSIAVDG (304 aa). Residues 878-924 are Extracellular-facing; it reads GIFLITDELWREEHQRSEPNMTKHSNASSSGQTYAITVTPTSSYYIL. Residues asparagine 897 and asparagine 903 are each glycosylated (N-linked (GlcNAc...) asparagine). A discontinuously helical membrane pass occupies residues 925–946; sequence YIYVATSESLLAMGFFRGLPFV. Topologically, residues 947 to 996 are cytoplasmic; the sequence is HTTITISKKLHQKMLHAVLSAPMSVLNTMKTGRIMNRFTKDMATIDDMLP. The chain crosses the membrane as a helical span at residues 997–1019; it reads LLMFDFVQLTVVVVGCILVVSIV. The Extracellular portion of the chain corresponds to 1020–1021; that stretch reads RP. A helical transmembrane segment spans residues 1022 to 1042; that stretch reads YIFLAATPLAIIFIVMRKYFL. Residues 1043 to 1103 are Cytoplasmic-facing; it reads RTGQQLKQLE…TATWFLYLST (61 aa). The chain crosses the membrane as a helical span at residues 1104–1124; that stretch reads LRWFLFRADILFVFFFTLAAW. Residues 1125 to 1138 are Extracellular-facing; sequence IAVGTNQDKPGEIG. A helical membrane pass occupies residues 1139–1159; that stretch reads IIICLAMLILGTFQWCVATSI. Residues 1160 to 1485 are Cytoplasmic-facing; the sequence is AVDGMMRSVD…AEDNIQDTRL (326 aa). Residues 1211–1444 enclose the ABC transporter 2 domain; that stretch reads IEVRNLTVKY…TSHLKQAISP (234 aa). ATP is bound by residues tyrosine 1220 and 1245–1252; that span reads GRTGSGKS. The disordered stretch occupies residues 1452–1485; that stretch reads PRRNSSMRTPQSKLSSVTQTLQEEAEDNIQDTRL. The span at 1454–1473 shows a compositional bias: polar residues; the sequence is RNSSMRTPQSKLSSVTQTLQ. The span at 1474-1485 shows a compositional bias: acidic residues; it reads EEAEDNIQDTRL. The PDZ-binding motif lies at 1483-1485; it reads TRL.

Belongs to the ABC transporter superfamily. ABCC family. CFTR transporter (TC 3.A.1.202) subfamily. Monomer; does not require oligomerization for channel activity. Interacts with cse1l; this interaction may down-regulate cftr activity. Post-translationally, phosphorylated; this activates the channel. Dephosphorylation strongly decreases ATPase activity. Phosphorylation at PKA sites activates the channel. Phosphorylation at PKC sites enhances the response to phosphorylation by PKA. As to expression, detected in gut epithelium (at protein level). Detected in kidney, spleen, intestine and liver. Detected in pancreatic duct epithelium at 5 dpf and throughout adult life.

Its subcellular location is the apical cell membrane. It localises to the early endosome membrane. The protein resides in the cell membrane. The protein localises to the recycling endosome membrane. It is found in the endoplasmic reticulum membrane. The catalysed reaction is ATP + H2O + closed Cl(-) channel = ADP + phosphate + open Cl(-) channel.. The enzyme catalyses chloride(in) = chloride(out). It carries out the reaction hydrogencarbonate(in) = hydrogencarbonate(out). It catalyses the reaction ATP + H2O = ADP + phosphate + H(+). Functionally, epithelial ion channel that plays an important role in the regulation of epithelial ion and water transport and fluid homeostasis. Mediates the transport of chloride ions across the cell membrane. Possesses an intrinsic ATPase activity and utilizes ATP to gate its channel; the passive flow of anions through the channel is gated by cycles of ATP binding and hydrolysis by the ATP-binding domains. The ion channel is also permeable to HCO(3)(-); selectivity depends on the extracellular chloride concentration. Exerts its function also by modulating the activity of other ion channels and transporters. Contributes to the regulation of the pH and the ion content of the epithelial fluid layer. Required for normal fluid homeostasis in the gut. Required for normal volume expansion and cell shape changes of Kupffer's vesicle during embryonic development and for normal establishment of left-right body patterning. Required for normal resistance to infection by P.aeruginosa strain PA14 and strain SMC573. The sequence is that of Cystic fibrosis transmembrane conductance regulator from Danio rerio (Zebrafish).